A 241-amino-acid chain; its full sequence is Tumor necrosis factor ligand superfamily member 13 (241 aa).

The propeptide occupies 1–95 (MPASSPGHMG…KDGAKSRRRR (95 aa)). The region spanning 107–241 (SVLHLVPVNI…HGTFLGFVKL (135 aa)) is the THD domain. N-linked (GlcNAc...) asparagine glycosylation occurs at N115. Residues C187 and C202 are joined by a disulfide bond.

The protein belongs to the tumor necrosis factor family. In terms of assembly, homotrimer. The soluble form derives from the membrane form by proteolytic processing.

It is found in the secreted. Cytokine that binds to TNFRSF13B/TACI and to TNFRSF17/BCMA. Plays a role in the regulation of tumor cell growth. May be involved in monocyte/macrophage-mediated immunological processes. The chain is Tumor necrosis factor ligand superfamily member 13 (Tnfsf13) from Mus musculus (Mouse).